A 305-amino-acid chain; its full sequence is Oxygen-dependent coproporphyrinogen-III oxidase (305 aa).

Substrate is bound at residue serine 94. A divalent metal cation is bound by residues histidine 98 and histidine 108. Histidine 108 acts as the Proton donor in catalysis. Residue 110-112 coordinates substrate; sequence NVR. Positions 147 and 177 each coordinate a divalent metal cation. An important for dimerization region spans residues 242-277; the sequence is YVEFNLVYDRGTLFGLQTGGRTESILMSMPPLVRWE. Residue 260 to 262 participates in substrate binding; the sequence is GGR.

Belongs to the aerobic coproporphyrinogen-III oxidase family. In terms of assembly, homodimer. A divalent metal cation is required as a cofactor.

The protein resides in the cytoplasm. It carries out the reaction coproporphyrinogen III + O2 + 2 H(+) = protoporphyrinogen IX + 2 CO2 + 2 H2O. Its pathway is porphyrin-containing compound metabolism; protoporphyrin-IX biosynthesis; protoporphyrinogen-IX from coproporphyrinogen-III (O2 route): step 1/1. In terms of biological role, involved in the heme biosynthesis. Catalyzes the aerobic oxidative decarboxylation of propionate groups of rings A and B of coproporphyrinogen-III to yield the vinyl groups in protoporphyrinogen-IX. The chain is Oxygen-dependent coproporphyrinogen-III oxidase from Shewanella denitrificans (strain OS217 / ATCC BAA-1090 / DSM 15013).